The following is a 228-amino-acid chain: Cytochrome c oxidase subunit 2 (228 aa).

Residues 1 to 26 are Mitochondrial intermembrane-facing; the sequence is MATWANLGLQDSSSPLMEQLNFFHDH. A helical transmembrane segment spans residues 27 to 48; sequence TLLILTMITILVGYIMGMLSFN. The Mitochondrial matrix portion of the chain corresponds to 49-62; the sequence is KFTNRFLLHGQTIE. Residues 63–82 traverse the membrane as a helical segment; that stretch reads IIWTVLPAIILMFIAFPSLR. The Mitochondrial intermembrane portion of the chain corresponds to 83–228; it reads LLYLMDEINT…FIKWITSMTN (146 aa). Positions 161, 196, 198, 200, 204, and 207 each coordinate Cu cation. Position 198 (glutamate 198) interacts with Mg(2+).

The protein belongs to the cytochrome c oxidase subunit 2 family. In terms of assembly, component of the cytochrome c oxidase (complex IV, CIV), a multisubunit enzyme composed of a catalytic core of 3 subunits and several supernumerary subunits. The complex exists as a monomer or a dimer and forms supercomplexes (SCs) in the inner mitochondrial membrane with ubiquinol-cytochrome c oxidoreductase (cytochrome b-c1 complex, complex III, CIII). Cu cation is required as a cofactor.

The protein resides in the mitochondrion inner membrane. The enzyme catalyses 4 Fe(II)-[cytochrome c] + O2 + 8 H(+)(in) = 4 Fe(III)-[cytochrome c] + 2 H2O + 4 H(+)(out). Functionally, component of the cytochrome c oxidase, the last enzyme in the mitochondrial electron transport chain which drives oxidative phosphorylation. The respiratory chain contains 3 multisubunit complexes succinate dehydrogenase (complex II, CII), ubiquinol-cytochrome c oxidoreductase (cytochrome b-c1 complex, complex III, CIII) and cytochrome c oxidase (complex IV, CIV), that cooperate to transfer electrons derived from NADH and succinate to molecular oxygen, creating an electrochemical gradient over the inner membrane that drives transmembrane transport and the ATP synthase. Cytochrome c oxidase is the component of the respiratory chain that catalyzes the reduction of oxygen to water. Electrons originating from reduced cytochrome c in the intermembrane space (IMS) are transferred via the dinuclear copper A center (CU(A)) of subunit 2 and heme A of subunit 1 to the active site in subunit 1, a binuclear center (BNC) formed by heme A3 and copper B (CU(B)). The BNC reduces molecular oxygen to 2 water molecules using 4 electrons from cytochrome c in the IMS and 4 protons from the mitochondrial matrix. The protein is Cytochrome c oxidase subunit 2 (COII) of Anopheles gambiae (African malaria mosquito).